The primary structure comprises 975 residues: MVENISLNVTVKSSARKNQQQSPALSVKKRAQKSQDFDFQFNVDKPKVKAIVVRRRAPPSKVEPTNSSVPNTTKSPTPSVSSSKSAISTLSASPKANASNDDLMFNVSPTKPPVKSVLGDDFMLNVTTKPVVAQKAKPKITRAERLGKKQRQGKPLTKLSEEQITRALKSNKKPKNPNQLPTPGDLFRAQLEEERRQKRREEGGGDQEASADEEDAKNNSGGGSPRVKPSSAVKESKKSSDIEDSGESGEESATSDEEPDESSAQSPGQEKEPKQTAKKPPKAEETSSTNRFRTKKIGLFDQSDVEALKQLGQRAVKPVKETIFTGSKISTLGLHPHAVKNLEDLLSIRELTSVQQKTIPEVLQGKDVLVRSQTGSGKTLAYALPLVELLQKQQPRIQRKDGVLALVIVPTRELVMQTYELIQKLVKPYTWIVPGSLLGGESRKSEKARLRKGINILIGTPGRLVDHLLHTASFKLTKLQFLILDEADRLLELGYERDVKQLVEAIDKQRAECEDKELPQLQRMLLSATLTSQVQQLAGLTLKNPLYIDNSDEAASAALKSKDGYQKETIEALLEVDDGLGEYQEDVTGVLSIPENLQLSYVVVPPKLRLVALSSLLAKEVDASPKQFKAIVFMSTTEMVNFHHDMLNEALTRRVLDEEDEQEKGDSDDDGDIPLLQGLRFFKLHGSMTQTERQGVFRGFRDCASCVLLATDVVGRGIDVPDIKLVVQYTPPQTTADFVHRVGRTARAGRKGRAVLFLTPSEAQFVRHLEKKRIRIQQGDMYAYLQTLLPKDDEARTVQEAASNLQHKFQTLLEDDRELHDKSCKAFVSWMKFYSTFPKELKPIFNVRIAHMGHFAKSFALKEAPSKFAAKHAAPKAAPPTNRLTYTERDPEKIQAQKRAKRRFTTTVSGEVRQLQQRDVGAQKPGAPPPKGGFIGGGVGRSSFMKSLGKSRALNMSEFDSGLPPEGAAKRRKQA.

Over residues 1–24 (MVENISLNVTVKSSARKNQQQSPA) the composition is skewed to polar residues. Disordered regions lie at residues 1-38 (MVENISLNVTVKSSARKNQQQSPALSVKKRAQKSQDFD), 50-104 (AIVV…DDLM), and 127-295 (TTKP…FRTK). Residues 64–94 (PTNSSVPNTTKSPTPSVSSSKSAISTLSASP) show a composition bias toward low complexity. A phosphoserine mark is found at Ser75 and Ser99. Positions 190 to 203 (QLEEERRQKRREEG) are enriched in basic and acidic residues. Ser210, Ser220, and Ser224 each carry phosphoserine. Residues 242 to 261 (IEDSGESGEESATSDEEPDE) show a composition bias toward acidic residues. The segment covering 269-285 (QEKEPKQTAKKPPKAEE) has biased composition (basic and acidic residues). The Q motif motif lies at 327–356 (SKISTLGLHPHAVKNLEDLLSIRELTSVQQ). Positions 359 to 548 (IPEVLQGKDV…GLTLKNPLYI (190 aa)) constitute a Helicase ATP-binding domain. Residue 372-379 (SQTGSGKT) coordinates ATP. The DEAD box motif lies at 485–488 (DEAD). One can recognise a Helicase C-terminal domain in the interval 616–789 (LLAKEVDASP…DMYAYLQTLL (174 aa)). Ser667 is subject to Phosphoserine. 2 disordered regions span residues 915-942 (LQQRDVGAQKPGAPPPKGGFIGGGVGRS) and 955-975 (NMSEFDSGLPPEGAAKRRKQA).

It belongs to the DEAD box helicase family. DDX31/DBP7 subfamily.

It carries out the reaction ATP + H2O = ADP + phosphate + H(+). Functionally, probable ATP-dependent RNA helicase. This chain is Probable ATP-dependent RNA helicase CG8611, found in Drosophila melanogaster (Fruit fly).